Reading from the N-terminus, the 353-residue chain is F-box protein At3g58530 (353 aa).

Positions 8–56 (EEEEETWRREIVTSVMRLVSTRLPQTDLISLLLVSPWLYRTLISYPSIW) constitute an F-box; degenerate domain.

This chain is F-box protein At3g58530, found in Arabidopsis thaliana (Mouse-ear cress).